Here is a 217-residue protein sequence, read N- to C-terminus: Peroxiredoxin Q, chloroplastic (217 aa).

Residues 1 to 65 constitute a chloroplast transit peptide; sequence MAAICLPVAK…PPPSYSARIS (65 aa). Positions 70-217 constitute a Thioredoxin domain; sequence VSKGSVPPQF…DETLKFLQSA (148 aa). Cys-112 acts as the Cysteine sulfenic acid (-SOH) intermediate in catalysis. Cys-112 and Cys-117 are joined by a disulfide.

This sequence belongs to the peroxiredoxin family. BCP/PrxQ subfamily. In terms of assembly, monomer. As to expression, expressed in the leaves, roots and stems.

It localises to the plastid. The protein localises to the chloroplast thylakoid lumen. It catalyses the reaction a hydroperoxide + [thioredoxin]-dithiol = an alcohol + [thioredoxin]-disulfide + H2O. In terms of biological role, thiol-specific peroxidase that catalyzes the reduction of hydrogen peroxide and organic hydroperoxides to water and alcohols, respectively. Plays a role in cell protection against oxidative stress by detoxifying peroxides. Involved in both resistance against fungal disease and oxidative stress. This is Peroxiredoxin Q, chloroplastic (AFP1) from Gentiana triflora (Clustered gentian).